Reading from the N-terminus, the 732-residue chain is Trehalose phosphorylase (732 aa).

The propeptide occupies methionine 1–serine 25.

It belongs to the glycosyltransferase group 1 family. Glycosyltransferase 4 subfamily. In terms of assembly, homodimer.

It catalyses the reaction alpha,alpha-trehalose + phosphate = alpha-D-glucose + alpha-D-glucose 1-phosphate. Activity abolished by 1 mM Cu(2+). 0.1 mM Cu(2+) reduces trehalose phosphorolysis to 76% and trehalose synthesis to 48% of maximum activity. 1 mM Zn(2+) abolishes trehalose synthesis, and reduces trehalose phosphorolysis to 40% of maximum activity. Unaffected by EDTA. Reversibly catalyzes the synthesis and degradation of trehalose from glucose and alpha-D-glucose 1-phosphate. The equilibrium lies in the direction of trehalose synthesis. The protein is Trehalose phosphorylase of Grifola frondosa (Maitake).